We begin with the raw amino-acid sequence, 252 residues long: Probable transcriptional regulatory protein Npun_R5651 (252 aa).

The protein belongs to the TACO1 family.

It localises to the cytoplasm. In Nostoc punctiforme (strain ATCC 29133 / PCC 73102), this protein is Probable transcriptional regulatory protein Npun_R5651.